A 548-amino-acid polypeptide reads, in one-letter code: Membrane protein insertase YidC (548 aa).

Residues 6–26 form a helical membrane-spanning segment; sequence NLLVIALLFVSFMIWQAWEQD. The tract at residues 28-56 is disordered; it reads NPQPQTQQTTQTTTTAAGSAADQGVPASG. The span at 29–42 shows a compositional bias: low complexity; it reads PQPQTQQTTQTTTT. 4 consecutive transmembrane segments (helical) span residues 350 to 370, 424 to 444, 458 to 478, and 499 to 519; these read FVGN…GIMY, FPLI…MGSI, LSAQ…MFFI, and PVIF…YYIV.

The protein belongs to the OXA1/ALB3/YidC family. Type 1 subfamily. Interacts with the Sec translocase complex via SecD. Specifically interacts with transmembrane segments of nascent integral membrane proteins during membrane integration.

The protein resides in the cell inner membrane. Functionally, required for the insertion and/or proper folding and/or complex formation of integral membrane proteins into the membrane. Involved in integration of membrane proteins that insert both dependently and independently of the Sec translocase complex, as well as at least some lipoproteins. Aids folding of multispanning membrane proteins. The chain is Membrane protein insertase YidC from Salmonella dublin (strain CT_02021853).